Here is a 203-residue protein sequence, read N- to C-terminus: Ras-related protein Rab-8B (203 aa).

Residues 22–29, 70–74, and 128–131 each bind GTP; these read GDSGVGKS, DTAGQ, and NKCD. 2 S-geranylgeranyl cysteine lipidation sites follow: C202 and C203.

Belongs to the small GTPase superfamily. Rab family.

The protein resides in the cell membrane. Its function is as follows. Protein transport. Probably involved in vesicular traffic. In Dictyostelium discoideum (Social amoeba), this protein is Ras-related protein Rab-8B (rab8B).